The primary structure comprises 796 residues: Serine/threonine-protein kinase ATG1 (796 aa).

The Protein kinase domain occupies 9 to 304; the sequence is YVVGAEIGRG…FQEFFNDPVI (296 aa). Residues 15 to 23 and K38 each bind ATP; that span reads IGRGSFANV. D155 (proton acceptor) is an active-site residue. The span at 360–370 shows a compositional bias: acidic residues; it reads LEEEDEEEDQD. Disordered regions lie at residues 360 to 382, 389 to 408, and 450 to 480; these read LEEE…IQHM, LLNK…RREL, and PYTR…KVPI. Residues 389-403 are compositionally biased toward polar residues; that stretch reads LLNKTTQKQTEVQSQ. The span at 453–470 shows a compositional bias: low complexity; sequence RRYSSSSRSSSTGSNQRR.

It belongs to the protein kinase superfamily. Ser/Thr protein kinase family. APG1/unc-51/ULK1 subfamily. In terms of assembly, homodimer. Forms a ternary complex with ATG13 and ATG17.

The protein localises to the cytoplasm. Its subcellular location is the preautophagosomal structure membrane. It catalyses the reaction L-seryl-[protein] + ATP = O-phospho-L-seryl-[protein] + ADP + H(+). The enzyme catalyses L-threonyl-[protein] + ATP = O-phospho-L-threonyl-[protein] + ADP + H(+). Its function is as follows. Serine/threonine protein kinase involved in the cytoplasm to vacuole transport (Cvt) and found to be essential in autophagy, where it is required for the formation of autophagosomes. Involved in the clearance of protein aggregates which cannot be efficiently cleared by the proteasome. Required for selective autophagic degradation of the nucleus (nucleophagy) as well as for mitophagy which contributes to regulate mitochondrial quantity and quality by eliminating the mitochondria to a basal level to fulfill cellular energy requirements and preventing excess ROS production. Also involved in endoplasmic reticulum-specific autophagic process, in selective removal of ER-associated degradation (ERAD) substrates. Plays a key role in ATG9 and ATG23 cycling through the pre-autophagosomal structure and is necessary to promote ATG18 binding to ATG9 through phosphorylation of ATG9. Catalyzes phosphorylation of ATG4, decreasing the interaction between ATG4 and ATG8 and impairing deconjugation of PE-conjugated forms of ATG8. The protein is Serine/threonine-protein kinase ATG1 of Komagataella pastoris (Yeast).